A 175-amino-acid chain; its full sequence is Peptide deformylase (175 aa).

Residues C98 and H140 each contribute to the Fe cation site. Residue E141 is part of the active site. Position 144 (H144) interacts with Fe cation.

It belongs to the polypeptide deformylase family. Requires Fe(2+) as cofactor.

The catalysed reaction is N-terminal N-formyl-L-methionyl-[peptide] + H2O = N-terminal L-methionyl-[peptide] + formate. Removes the formyl group from the N-terminal Met of newly synthesized proteins. Requires at least a dipeptide for an efficient rate of reaction. N-terminal L-methionine is a prerequisite for activity but the enzyme has broad specificity at other positions. This chain is Peptide deformylase, found in Bradyrhizobium sp. (strain ORS 278).